Here is a 257-residue protein sequence, read N- to C-terminus: DNA repair protein RecO (257 aa).

It belongs to the RecO family.

Its function is as follows. Involved in DNA repair and RecF pathway recombination. The protein is DNA repair protein RecO of Variovorax paradoxus (strain S110).